A 362-amino-acid chain; its full sequence is D-alanine--D-alanine ligase (362 aa).

An ATP-grasp domain is found at Lys-134 to Arg-345. Gly-170–Glu-225 is a binding site for ATP. Mg(2+)-binding residues include Asp-298, Glu-312, and Asn-314.

This sequence belongs to the D-alanine--D-alanine ligase family. The cofactor is Mg(2+). Mn(2+) is required as a cofactor.

The protein localises to the cytoplasm. It carries out the reaction 2 D-alanine + ATP = D-alanyl-D-alanine + ADP + phosphate + H(+). It participates in cell wall biogenesis; peptidoglycan biosynthesis. In terms of biological role, cell wall formation. In Lactobacillus delbrueckii subsp. bulgaricus (strain ATCC BAA-365 / Lb-18), this protein is D-alanine--D-alanine ligase.